Consider the following 465-residue polypeptide: Serine carboxypeptidase-like 46 (465 aa).

The first 25 residues, 1-25 (MPRLQCLTMATSLILLLQALSLVSS), serve as a signal peptide directing secretion. 3 disulfide bridges follow: cysteine 88/cysteine 344, cysteine 245/cysteine 263, and cysteine 288/cysteine 313. N-linked (GlcNAc...) asparagine glycans are attached at residues asparagine 137 and asparagine 170. Serine 179 is an active-site residue. N-linked (GlcNAc...) asparagine glycosylation occurs at asparagine 246. Catalysis depends on residues aspartate 381 and histidine 438.

The protein belongs to the peptidase S10 family. Ubiquitous.

The protein localises to the secreted. In terms of biological role, probable carboxypeptidase. This Arabidopsis thaliana (Mouse-ear cress) protein is Serine carboxypeptidase-like 46 (SCPL46).